Here is a 305-residue protein sequence, read N- to C-terminus: Transmembrane epididymal protein 1 (305 aa).

The helical transmembrane segment at 4–24 (FIGHISPGLFLVFYGLYQAII) threads the bilayer. A glycan (N-linked (GlcNAc...) asparagine) is linked at asparagine 32. 6 helical membrane passes run 51–71 (LWQI…LIVY), 100–120 (LTMF…RSVL), 124–144 (LVLL…LLLV), 159–179 (SLLI…LWAP), 187–207 (IETF…FILF), and 223–243 (IMLV…CMLG). Residues 285–305 (EQQDRDDQAPLLSKSSPCDRA) are disordered.

It belongs to the TMEM45 family.

It is found in the membrane. The protein is Transmembrane epididymal protein 1 (Teddm1) of Rattus norvegicus (Rat).